Here is a 703-residue protein sequence, read N- to C-terminus: Protein teflon (703 aa).

The C2H2-type 1 zinc finger occupies 32-55; it reads MLCHFCKDIFTHLPEFMRHLQWSH. Disordered regions lie at residues 78-111, 140-161, 205-239, and 339-434; these read SSEDDVQSQANSCSSGDSGLAGEMEDADGEPGSS, EQSYSKNPPDSRTEGFRCARKP, NDVSKPRLNKLRSKLNNSLSSNISGPPKQSKMPSL, and SQQP…SKLE. A compositionally biased stretch (polar residues) spans 84–94; that stretch reads QSQANSCSSGD. Over residues 148 to 161 the composition is skewed to basic and acidic residues; sequence PDSRTEGFRCARKP. 2 stretches are compositionally biased toward polar residues: residues 339–352 and 364–373; these read SQQPSELNTTNNAV and SLTVISSSPI. 2 consecutive C2H2-type zinc fingers follow at residues 649–672 and 677–700; these read YFCECCEEIFPNEARYKKHVQSVH and FTCSECGKSFKRLYFYDKHLKTVH.

Belongs to the Teflon family.

It localises to the nucleus. The protein localises to the chromosome. Functionally, specifically required in males for proper segregation of autosomal bivalents at meiosis I. Expression is required in the male germ line prior to spermatocyte stage S4. May have a role as a bridging molecule maintaining adhesion to hold autosome bivalents together via heterochromatic connections. This is Protein teflon from Drosophila persimilis (Fruit fly).